Reading from the N-terminus, the 310-residue chain is Methionyl-tRNA formyltransferase (310 aa).

Residue 109 to 112 (SLLP) participates in (6S)-5,6,7,8-tetrahydrofolate binding.

The protein belongs to the Fmt family.

The enzyme catalyses L-methionyl-tRNA(fMet) + (6R)-10-formyltetrahydrofolate = N-formyl-L-methionyl-tRNA(fMet) + (6S)-5,6,7,8-tetrahydrofolate + H(+). Attaches a formyl group to the free amino group of methionyl-tRNA(fMet). The formyl group appears to play a dual role in the initiator identity of N-formylmethionyl-tRNA by promoting its recognition by IF2 and preventing the misappropriation of this tRNA by the elongation apparatus. In Macrococcus caseolyticus (strain JCSC5402) (Macrococcoides caseolyticum), this protein is Methionyl-tRNA formyltransferase.